The following is a 575-amino-acid chain: Protein NRD1 (575 aa).

A CID domain is found at 1-153 (MQQDDDFQNF…AIRSKCFAMD (153 aa)). Residues 225–282 (SHTSVGTVAPPQAHTITEYGSRRERERERERYNSRRNRSRSPPAPFSQPSTGRKDRYP) are disordered. Positions 244-257 (GSRRERERERERYN) are enriched in basic and acidic residues. A phosphoserine mark is found at serine 263, serine 265, and serine 271. The RRM domain occupies 339-409 (RTLFIGGVPL…LPLRTRWGVG (71 aa)). Positions 468-575 (VSSKAISQKM…NQQQQQQQQS (108 aa)) are disordered. Composition is skewed to polar residues over residues 471–482 (KAISQKMPTDSG) and 491–501 (PNKSGSISSIS). Low complexity-rich tracts occupy residues 517-527 (QYVQPMMQQPY) and 549-575 (QQQF…QQQS).

It localises to the nucleus. Its function is as follows. Plays a role in sequence-specific regulation of nuclear pre-mRNA abundance. This is Protein NRD1 (NRD1) from Saccharomyces cerevisiae (strain ATCC 204508 / S288c) (Baker's yeast).